The primary structure comprises 152 residues: Cytochrome c-type biogenesis CcmH-like mitochondrial protein (152 aa).

Over 1-83 (MATEEDVKQR…ILYTPKFDLQ (83 aa)) the chain is Mitochondrial intermembrane. Heme is bound by residues Cys26 and Cys29. A helical transmembrane segment spans residues 84-104 (TAAIWLSPVIVGGVAAGVWAY). The Mitochondrial matrix segment spans residues 105-152 (KKHRQRTNVHIMALNLVRGVPLTPREKETMLDVLTPPPPANKWWWPGK).

Belongs to the CcmH/CycL/Ccl2/NrfF family.

The protein resides in the mitochondrion inner membrane. In terms of biological role, plays a role in mitochondrial cytochrome c maturation. Probable component of a heme lyase complex involved in the reduction of apocytochrome c. This chain is Cytochrome c-type biogenesis CcmH-like mitochondrial protein, found in Oryza sativa subsp. indica (Rice).